The chain runs to 129 residues: MSASLVRATVRAVSKRKLQPTRAALTLTPSAVNKIKQLLKDKPEHVGLKVGVRTRGCNGLSYSLEYTKTKGDADEEVIQDGVRVFIEKKAQLTLLGTEMDYVEDKLSSEFVFNNPNIKGTCGCGESFNV.

The transit peptide at 1–12 (MSASLVRATVRA) directs the protein to the mitochondrion. Fe cation is bound by residues Cys57, Cys121, and Cys123.

The protein belongs to the HesB/IscA family. Interacts with CRY2, but not with CRY1 (in vitro).

It is found in the mitochondrion. Its function is as follows. Involved in the maturation of mitochondrial 4Fe-4S proteins functioning late in the iron-sulfur cluster assembly pathway. Probably involved in the binding of an intermediate of Fe/S cluster assembly. The protein is Iron-sulfur cluster assembly 1 homolog, mitochondrial (Isca1) of Rattus norvegicus (Rat).